A 1346-amino-acid polypeptide reads, in one-letter code: Toll-like receptor Tollo (1346 aa).

The first 21 residues, 1–21, serve as a signal peptide directing secretion; sequence MLATTHMLYVLIATCVIPIFG. The Extracellular segment spans residues 22–1021; sequence AALSKTVLYQ…NQPPKLDYIP (1000 aa). 3 N-linked (GlcNAc...) asparagine glycosylation sites follow: asparagine 63, asparagine 112, and asparagine 126. 23 LRR repeats span residues 97–120, 124–146, 151–174, 176–198, 209–232, 234–256, 257–280, 282–304, 306–330, 331–354, 355–378, 380–402, 404–426, 427–450, 452–473, 474–497, 498–521, 523–544, 546–568, 570–591, 593–614, 615–637, and 638–661; these read LVEL…SFRG, LRNL…MASN, FRQL…MVCP, KSLQ…YFSA, GSTL…MLSA, GRLT…AFEG, LLSL…LFAE, KQLQ…IFGE, AELL…TFVG, LKRL…IFRP, LASL…IFAD, TNLH…TLQG, KNLL…SLVN, CSQL…LAHV, LLKT…SITQ, LESL…VFDR, MSSL…SLQR, SQLQ…LFTE, PNLV…HIPI, LQWL…EIES, LSLS…SSIP, NSVE…TFFK, and KPNL…ALRL. An N-linked (GlcNAc...) asparagine glycan is attached at asparagine 182. Asparagine 291 carries an N-linked (GlcNAc...) asparagine glycan. Residue asparagine 426 is glycosylated (N-linked (GlcNAc...) asparagine). Asparagine 468 carries an N-linked (GlcNAc...) asparagine glycan. N-linked (GlcNAc...) asparagine glycosylation is present at asparagine 505. A glycan (N-linked (GlcNAc...) asparagine) is linked at asparagine 552. Asparagine 640 carries N-linked (GlcNAc...) asparagine glycosylation. 4 disulfides stabilise this stretch: cysteine 682/cysteine 710, cysteine 684/cysteine 733, cysteine 757/cysteine 763, and cysteine 761/cysteine 776. LRR repeat units follow at residues 790–813, 814–837, 838–861, 863–885, 887–909, and 912–938; these read PMDS…AFIG, RKRL…TFYG, LLEL…EFQG, DNLQ…TFTH, YHLK…NFLP, and LNEL…YINR. 2 N-linked (GlcNAc...) asparagine glycosylation sites follow: asparagine 823 and asparagine 832. Cysteine 924 and cysteine 950 form a disulfide bridge. 2 N-linked (GlcNAc...) asparagine glycosylation sites follow: asparagine 956 and asparagine 1000. A helical transmembrane segment spans residues 1022-1042; it reads ILVAILTAFIFVMICISLVFI. Residues 1043–1346 lie on the Cytoplasmic side of the membrane; the sequence is FRQEMRVWCH…PTPASRNLHM (304 aa). Residues 1074–1209 enclose the TIR domain; that stretch reads KLFDAFVSYS…LFWQKLRFAL (136 aa). Residues 1235-1346 form a disordered region; the sequence is HHHHHVHQQA…PTPASRNLHM (112 aa). Low complexity predominate over residues 1267 to 1300; sequence PGSFRRQPSLHQQQQQQQQIRGNNNTTQQQQQQQ.

It belongs to the Toll-like receptor family. May interact (via the extracellular domain) with 18w (via the extracellular domain).

The protein localises to the cell membrane. Its subcellular location is the apical cell membrane. In terms of biological role, toll-related receptor. Probably specific to larval innate immunity. Involved in the tracheal immune response of larvae to Gram-negative and perhaps Gram-positive bacteria; upon infection it negatively regulates the immune deficiency (Imd) signaling cascade specifically in the respiratory epithelium to prevent the overexpression of antimicrobial peptides (AMP). Involved in the NF-kappa-B-dependent apoptosis of unfit cells during cell competition. Involved in neuron-specific glycosylation. Positively controls the neuromuscular junction (NMJ) growth in presynaptic motorneurons, probably via the JNK pathway. During development of the peripheral nervous system, may function in the NF-kappa-B (rel) regulatory cascade to repress expression of the neuron-specific genes sc and ase in non-neuronal cells. Promotes heterophilic cell adhesion with 18w in vitro. May have a minor role in leg development. May be involved in determining the proximal cell fate in the wing, possibly by negatively regulating the Dpp signaling pathway. May also be involved in the Dpp signaling pathway in the eye. Possibly functions with 18w and Toll-6 during convergent extension, to help direct proper planar cell polarity, cell intercalation and axis elongation. The protein is Toll-like receptor Tollo of Drosophila melanogaster (Fruit fly).